Here is a 359-residue protein sequence, read N- to C-terminus: Peptide chain release factor 1 (359 aa).

The residue at position 236 (glutamine 236) is an N5-methylglutamine.

The protein belongs to the prokaryotic/mitochondrial release factor family. Post-translationally, methylated by PrmC. Methylation increases the termination efficiency of RF1.

It localises to the cytoplasm. In terms of biological role, peptide chain release factor 1 directs the termination of translation in response to the peptide chain termination codons UAG and UAA. This Streptococcus pneumoniae (strain Taiwan19F-14) protein is Peptide chain release factor 1.